The following is a 45-amino-acid chain: Photosystem II reaction center protein K (45 aa).

The propeptide occupies 1 to 8; the sequence is MEAVFLLA. A helical transmembrane segment spans residues 24 to 44; it reads LPVIPVFFLALAFVWQAAVGF.

This sequence belongs to the PsbK family. As to quaternary structure, PSII is composed of 1 copy each of membrane proteins PsbA, PsbB, PsbC, PsbD, PsbE, PsbF, PsbH, PsbI, PsbJ, PsbK, PsbL, PsbM, PsbT, PsbX, PsbY, PsbZ, Psb30/Ycf12, peripheral proteins PsbO, CyanoQ (PsbQ), PsbU, PsbV and a large number of cofactors. It forms dimeric complexes.

It is found in the cellular thylakoid membrane. Functionally, one of the components of the core complex of photosystem II (PSII). PSII is a light-driven water:plastoquinone oxidoreductase that uses light energy to abstract electrons from H(2)O, generating O(2) and a proton gradient subsequently used for ATP formation. It consists of a core antenna complex that captures photons, and an electron transfer chain that converts photonic excitation into a charge separation. The sequence is that of Photosystem II reaction center protein K from Crocosphaera subtropica (strain ATCC 51142 / BH68) (Cyanothece sp. (strain ATCC 51142)).